The following is a 177-amino-acid chain: Interleukin-25 (177 aa).

An N-terminal signal peptide occupies residues 1–32; sequence MRERPRLGEDSSLISLFLQVVAFLAMVMGTHT. The segment at 58–81 is disordered; the sequence is PVPPLEPARPNRHPESCRASEDGP. The span at 69–78 shows a compositional bias: basic and acidic residues; it reads RHPESCRASE. 2 disulfide bridges follow: Cys110–Cys168 and Cys115–Cys170. Asn136 is a glycosylation site (N-linked (GlcNAc...) asparagine).

It belongs to the IL-17 family. In terms of tissue distribution, expressed at low levels in several tissues, including brain, kidney, lung, prostate, testis, spinal cord, adrenal gland, and trachea.

The protein resides in the secreted. In terms of biological role, cytokine produced by various cells such as eosinophils, T-helper type 2 (Th2) cells or epithelial cells that plays a role in internal safety of adaptive immune responses by regulating cytokine production. Promotes and augments T-helper type 2 responses locally or systemically. Exerts its activity via its receptor composed of IL17RA and IL17RB for signal transduction. In turn, stimulates the JAK2-STAT5A pathway and promotes the secretion of type-2 associated cytokines including IL4, IL9 and IL13. Also induces the release of IL8, and IL6 from eosinophils through the combined activation of MAPK and NF-kappa-B pathways. Inhibits the differentiation of T-helper (Th17) cells via the production of IL4, IL5 and IL13. The chain is Interleukin-25 (IL25) from Homo sapiens (Human).